Consider the following 109-residue polypeptide: Phosphoribosyl-ATP pyrophosphatase (109 aa).

This sequence belongs to the PRA-PH family.

Its subcellular location is the cytoplasm. The catalysed reaction is 1-(5-phospho-beta-D-ribosyl)-ATP + H2O = 1-(5-phospho-beta-D-ribosyl)-5'-AMP + diphosphate + H(+). It functions in the pathway amino-acid biosynthesis; L-histidine biosynthesis; L-histidine from 5-phospho-alpha-D-ribose 1-diphosphate: step 2/9. In Marinobacter nauticus (strain ATCC 700491 / DSM 11845 / VT8) (Marinobacter aquaeolei), this protein is Phosphoribosyl-ATP pyrophosphatase.